The primary structure comprises 146 residues: Protein translocase subunit SecE (146 aa).

Residues 1 to 81 (MSDERYAASD…KVKKPKKSAD (81 aa)) form a disordered region. The span at 10-20 (DGGGTEVGSGT) shows a compositional bias: gly residues. A compositionally biased stretch (polar residues) spans 45–54 (RAANASNTGA). The span at 69-81 (KEGKVKKPKKSAD) shows a compositional bias: basic and acidic residues. The chain crosses the membrane as a helical span at residues 118–138 (VVLAFLAFMVALVGLADFGLA).

The protein belongs to the SecE/SEC61-gamma family. In terms of assembly, component of the Sec protein translocase complex. Heterotrimer consisting of SecY, SecE and SecG subunits. The heterotrimers can form oligomers, although 1 heterotrimer is thought to be able to translocate proteins. Interacts with the ribosome. Interacts with SecDF, and other proteins may be involved. Interacts with SecA.

The protein localises to the cell membrane. In terms of biological role, essential subunit of the Sec protein translocation channel SecYEG. Clamps together the 2 halves of SecY. May contact the channel plug during translocation. The sequence is that of Protein translocase subunit SecE from Mycobacterium leprae (strain TN).